A 501-amino-acid chain; its full sequence is Cytochrome P450 monooxygenase ccsG (501 aa).

The N-terminal stretch at 1–28 (MMITLFTLAVVSIGFFLWWLLTVQPAVT) is a signal peptide. N-linked (GlcNAc...) asparagine glycans are attached at residues asparagine 115 and asparagine 154. Cysteine 443 serves as a coordination point for heme.

Belongs to the cytochrome P450 family. The cofactor is heme.

It functions in the pathway mycotoxin biosynthesis. Its function is as follows. Cytochrome P450 monooxygenase; part of the gene cluster that mediates the biosynthesis of a family of the mycotoxins cytochalasins E and K. The hybrid PKS-NRPS synthetase ccsA and the enoyl reductase ccsC are responsible for fusion of phenylalanine with an octaketide backbone and subsequent release of the stable tetramic acid precursor. The polyketide synthase module (PKS) of the PKS-NRPS ccsA is responsible for the synthesis of the octaketide backbone. The downstream nonribosomal peptide synthetase (NRPS) amidates the carboxyl end of the octaketide with a phenylalanine. A reductase-like domain (R) at the C-terminus catalyzes the reductive release of the polyketide-amino acid intermediate. Because ccsA lacks a designated enoylreductase (ER) domain, the required activity is provided the enoyl reductase ccsC. Upon formation of the 11-membered carbocycle-fused perhydroisoindolone intermediate, a number of oxidative steps are required to afford the final cytochalasin E and K, including two hydroxylations at C17 and C18, one alcohol oxidation at C17, one epoxidation at C6 and C7 and two Baeyer-Villiger oxidations. The oxidative modification at C17, C18 and the C6-C7 epoxidation are likely to be catalyzed by the two cytochrome P450 oxygenases ccsD and ccsG. CcsD may be responsible for the epoxidation of the C6-C7 double bond. CcsG may be responsible for the successive oxidative modifications at C17 and C18. The double Baeyer-Villiger oxidations of ketocytochalasin to precytochalasin and cytochalasin Z(16) are among the final steps leading to cytochalasin E and K and are catalyzed by ccsB. The first oxygen insertion step follows that of the classic BVMO mechanism, generating the ester precytochalasin. Release of precytochalasin into an aqueous environment can generate the shunt product iso-precytochalasin through spontaneous isomerization. Alternatively, precytochalasin can undergo further oxidation by ccsB to yield the in-line carbonate-containing cytochalasin Z(16). Cytochalasin Z(16) is a precursor to cytochalasin E and cytochalasin K, whereas iso-precytochalasin is a precursor to cytochalasin Z(17) and rosellichalasin. The hydrolyase ccsE may catalyze hydrolysis of epoxide bond in cytochalasin E to afford cytochalasin K. The function of ccsF has not been assigned but it may play a role in post-PKS-NRPS biosynthetic step, resistance or transport of cytochalasins and related PKS-NRPS products. In Aspergillus clavatus (strain ATCC 1007 / CBS 513.65 / DSM 816 / NCTC 3887 / NRRL 1 / QM 1276 / 107), this protein is Cytochrome P450 monooxygenase ccsG.